The sequence spans 210 residues: Tumor protein D53 homolog (210 aa).

A coiled-coil region spans residues 22 to 73 (VTDVDFTSMISEEEKEELKAELAKLEDEISTLRQVLAAKEKHLIEIKQKLGM). Positions 185 to 197 (SSTAHASAQSSLA) are enriched in polar residues. The segment at 185–210 (SSTAHASAQSSLAGTRLPESEEELQC) is disordered.

It belongs to the TPD52 family. In terms of assembly, forms a homodimer or heterodimer with other members of the family.

The chain is Tumor protein D53 homolog (TPD52L1) from Gallus gallus (Chicken).